The sequence spans 175 residues: UPF0398 protein SSA_1858 (175 aa).

This sequence belongs to the UPF0398 family.

The protein is UPF0398 protein SSA_1858 of Streptococcus sanguinis (strain SK36).